A 570-amino-acid chain; its full sequence is Rqc2 homolog RqcH (570 aa).

The segment at Met-1–Pro-173 is NFACT-N domain. Residues Asp-179–Lys-281 are hhH domain. 2 coiled-coil regions span residues Phe-279–Leu-336 and Thr-368–Lys-430. The interval Ala-282–Pro-434 is coiled-coil-M (CCM). Residues His-446 to Ser-570 form an NFACT-R region.

This sequence belongs to the NEMF family. Associates with isolated or stalled 50S ribosomal subunits. Binds to RqcP. Interacts with ribosomal protein uL11. Displaced from the 50S subunit by thiostrepton. In crystallized 50S subunits RqcH is variously associated with A/P-site tRNA, P-site tRNA and RqcP, an E-site tRNA or A- and P-site tRNAs and RqcP2(YlmH).

In terms of biological role, key component of the ribosome quality control system (RQC), a ribosome-associated complex that mediates the extraction of incompletely synthesized nascent chains from stalled ribosomes and their subsequent degradation. RqcH recruits Ala-charged tRNA, and with RqcP directs the elongation of stalled nascent chains on 50S ribosomal subunits, leading to non-templated C-terminal alanine extensions (Ala tail). The Ala tail promotes nascent chain degradation. RqcH, RqcP and charged tRNA(Ala) are necessary and sufficient to add an Ala tail to a model stalled nascent peptide; does not add Val. Binds the P-site tRNA in 50S ribosomal subunit, unwinds the anticodon stem and interacts with the splayed anticodon. Selectively binds tRNA(Ala) isoacceptors, even in the absence of the 50S ribosomal subunit. Adds between 1 and at least 8 Ala residues to the nascent chain; detection of the Ala tail requires either deletion of clpP or its inhibition. Binds to 50S ribosomal subunits, at least 30% of which contain a P-site tRNA and thus are obstructed. In Bacillus subtilis (strain 168), this protein is Rqc2 homolog RqcH.